The chain runs to 1368 residues: DNA-directed RNA polymerase subunit beta (1368 aa).

The protein belongs to the RNA polymerase beta chain family. The RNAP catalytic core consists of 2 alpha, 1 beta, 1 beta' and 1 omega subunit. When a sigma factor is associated with the core the holoenzyme is formed, which can initiate transcription.

It catalyses the reaction RNA(n) + a ribonucleoside 5'-triphosphate = RNA(n+1) + diphosphate. Its function is as follows. DNA-dependent RNA polymerase catalyzes the transcription of DNA into RNA using the four ribonucleoside triphosphates as substrates. The sequence is that of DNA-directed RNA polymerase subunit beta from Herminiimonas arsenicoxydans.